Reading from the N-terminus, the 240-residue chain is Adapter protein MecA (240 aa).

The interval 118–138 is disordered; sequence EQRAQQQKHSHKSEQKQTKQR.

Belongs to the MecA family. Homodimer.

Enables the recognition and targeting of unfolded and aggregated proteins to the ClpC protease or to other proteins involved in proteolysis. This is Adapter protein MecA from Staphylococcus haemolyticus (strain JCSC1435).